The sequence spans 529 residues: Peptide chain release factor 3 (529 aa).

Residues 11 to 280 (AKRRTFAIIS…GLVKWAPAPM (270 aa)) enclose the tr-type G domain. Residues 20 to 27 (SHPDAGKT), 88 to 92 (DTPGH), and 142 to 145 (NKLD) each bind GTP.

This sequence belongs to the TRAFAC class translation factor GTPase superfamily. Classic translation factor GTPase family. PrfC subfamily.

The protein localises to the cytoplasm. In terms of biological role, increases the formation of ribosomal termination complexes and stimulates activities of RF-1 and RF-2. It binds guanine nucleotides and has strong preference for UGA stop codons. It may interact directly with the ribosome. The stimulation of RF-1 and RF-2 is significantly reduced by GTP and GDP, but not by GMP. This Photorhabdus laumondii subsp. laumondii (strain DSM 15139 / CIP 105565 / TT01) (Photorhabdus luminescens subsp. laumondii) protein is Peptide chain release factor 3.